Reading from the N-terminus, the 284-residue chain is uncharacterized protein (284 aa).

The protein belongs to the IIV-6 436R family.

This is an uncharacterized protein from Invertebrate iridescent virus 3 (IIV-3).